The sequence spans 100 residues: Co-chaperonin GroES (100 aa).

Belongs to the GroES chaperonin family. In terms of assembly, heptamer of 7 subunits arranged in a ring. Interacts with the chaperonin GroEL.

The protein resides in the cytoplasm. Its function is as follows. Together with the chaperonin GroEL, plays an essential role in assisting protein folding. The GroEL-GroES system forms a nano-cage that allows encapsulation of the non-native substrate proteins and provides a physical environment optimized to promote and accelerate protein folding. GroES binds to the apical surface of the GroEL ring, thereby capping the opening of the GroEL channel. This Mycobacterium leprae (strain Br4923) protein is Co-chaperonin GroES.